Reading from the N-terminus, the 370-residue chain is Uroporphyrinogen decarboxylase (370 aa).

Residues 29–33, Asp79, Tyr155, Ser210, and His342 each bind substrate; that span reads RQAGR.

Belongs to the uroporphyrinogen decarboxylase family. In terms of assembly, homodimer.

Its subcellular location is the cytoplasm. It carries out the reaction uroporphyrinogen III + 4 H(+) = coproporphyrinogen III + 4 CO2. It functions in the pathway porphyrin-containing compound metabolism; protoporphyrin-IX biosynthesis; coproporphyrinogen-III from 5-aminolevulinate: step 4/4. In terms of biological role, catalyzes the decarboxylation of four acetate groups of uroporphyrinogen-III to yield coproporphyrinogen-III. The chain is Uroporphyrinogen decarboxylase from Verminephrobacter eiseniae (strain EF01-2).